The chain runs to 602 residues: VIN3-like protein 1 (602 aa).

Residues 1–38 (MDSSSTKSKISHSRKTNKKSNKKHESNGKQQQQQDVDG) form a disordered region. Positions 9-22 (KISHSRKTNKKSNK) are enriched in basic residues. The PHD-type zinc finger occupies 67 to 137 (RCSCCVCHNF…CFCCYSCGKV (71 aa)). A Nuclear localization signal motif is present at residues 144 to 151 (WKKQLVAA). Residues 242–340 (VPAACRFHFE…AMCFTKSVEI (99 aa)) form the Fibronectin type-III domain. Residues 430 to 470 (LNEEFTPPDSSGGEDNGVPLNSLAEADGGDHDDNCDDAVSN) form a disordered region. Residues 502-602 (AISDSNDSEN…RPNNGVMTSH (101 aa)) are VIN3-Interacting Domain (VID).

As to quaternary structure, interacts with VIN3 and VIL2. The heterodimer made of VIN3 and VIL1 is required for establishing the vernalization-induced epigenetic silencing of FLC. Component of the plant homeodomain / polycomb repressive complex 2 (PHD-PRC2) large complex during prolonged cold, composed of core PRC2 components (VRN2, EZA1, FIE and MSI1), and three related PHD finger proteins (VIL1, VIL2 and VIN3) that mediates histone H3 trimethylation on 'Lys-27' (H3K27me3). As to expression, accumulates in shoot and root apices, and in leaves.

It localises to the nucleus. Its subcellular location is the nucleus speckle. Involved in both the vernalization and photoperiod pathways by regulating expression of the related floral repressors FLOWERING LOCUS C (FLC) and FLOWERING LOCUS M (FLM). Together with VIN3, required during vernalization for the modifications of FLC and FLM chromatin that are associated with an epigenetically silenced state (e.g. chromatin modifications, histone deacetylation, and trimethylated H3 'Lys-4' H3K4me3 and 'Lys-27' H3K27me3) and with acquisition of competence to flower. Promotes flowering in short days (SD=8 hours light/16 hours dark). Associates dynamically at FLC locus; during vernalization, binds to specific sites, but when in warm conditions, distributed along the whole locus. The chain is VIN3-like protein 1 (VIL1) from Arabidopsis thaliana (Mouse-ear cress).